A 1183-amino-acid chain; its full sequence is Chromosome partition protein Smc (1183 aa).

32–39 (PNGCGKTN) provides a ligand contact to ATP. 2 coiled-coil regions span residues 167 to 322 (ITRY…ERLN) and 358 to 497 (AEFE…ALCN). The segment at 409–442 (KEHLEGSVNRLDQRKRDLERSMEQAEPERRRTSE) is disordered. A compositionally biased stretch (basic and acidic residues) spans 419-442 (LDQRKRDLERSMEQAEPERRRTSE). The SMC hinge domain maps to 523–632 (LGCLSDLISV…VADLDAAEQL (110 aa)). 2 coiled-coil regions span residues 669 to 941 (GKKA…VMER) and 980 to 1025 (NELA…ALEK).

The protein belongs to the SMC family. As to quaternary structure, homodimer.

It localises to the cytoplasm. Functionally, required for chromosome condensation and partitioning. The protein is Chromosome partition protein Smc of Chlorobaculum tepidum (strain ATCC 49652 / DSM 12025 / NBRC 103806 / TLS) (Chlorobium tepidum).